The sequence spans 101 residues: Small ribosomal subunit protein bS6 (101 aa).

Belongs to the bacterial ribosomal protein bS6 family.

In terms of biological role, binds together with bS18 to 16S ribosomal RNA. The polypeptide is Small ribosomal subunit protein bS6 (Paenarthrobacter aurescens (strain TC1)).